A 108-amino-acid polypeptide reads, in one-letter code: Large ribosomal subunit protein uL24 (108 aa).

This sequence belongs to the universal ribosomal protein uL24 family. In terms of assembly, part of the 50S ribosomal subunit.

Functionally, one of two assembly initiator proteins, it binds directly to the 5'-end of the 23S rRNA, where it nucleates assembly of the 50S subunit. In terms of biological role, one of the proteins that surrounds the polypeptide exit tunnel on the outside of the subunit. This is Large ribosomal subunit protein uL24 from Geobacter metallireducens (strain ATCC 53774 / DSM 7210 / GS-15).